A 187-amino-acid chain; its full sequence is UPF0301 protein Sputcn32_2681 (187 aa).

This sequence belongs to the UPF0301 (AlgH) family.

This is UPF0301 protein Sputcn32_2681 from Shewanella putrefaciens (strain CN-32 / ATCC BAA-453).